The chain runs to 256 residues: Small ribosomal subunit protein eS1 (256 aa).

Ala-2 bears the N-acetylalanine; partial mark.

Belongs to the eukaryotic ribosomal protein eS1 family. Component of the small ribosomal subunit. Mature ribosomes consist of a small (40S) and a large (60S) subunit. The 40S subunit contains about 33 different proteins and 1 molecule of RNA (18S). The 60S subunit contains about 49 different proteins and 3 molecules of RNA (25S, 5.8S and 5S).

Its subcellular location is the cytoplasm. This is Small ribosomal subunit protein eS1 from Postia placenta (strain ATCC 44394 / Madison 698-R) (Brown rot fungus).